A 182-amino-acid polypeptide reads, in one-letter code: CD-NTase-associated protein 15 (182 aa).

2 helical membrane-spanning segments follow: residues 11 to 31 (ITGWFTVIFFLLLIIVSCTVW) and 33 to 53 (IGWIDIISYTVTISTFITIGY).

The protein belongs to the CBASS Cap15 membrane effector family. As to quaternary structure, the beta barrel domain oligomerizes; in the presence of cyclic nucleotides (probably 3',2'-cGAMP) higher-level oligomers occur.

Its subcellular location is the cell membrane. Effector protein of a CBASS antivirus system. CBASS (cyclic oligonucleotide-based antiphage signaling system) provides immunity against bacteriophage. The CD-NTase protein (CdnE) synthesizes cyclic nucleotides in response to infection; these serve as specific second messenger signals. The signals activate a diverse range of effectors, leading to bacterial cell death and thus abortive phage infection. This system triggers membrane disruption without lysis. A type I-B CBASS system. Binds cyclic nucleotide second messenger 3',2'-cGAMP, probably oligomerizing, and induces cell membrane shrinkage and rupture, leading to cell death. In terms of biological role, protects S.aureus against phage infection. When the CBASS operon (cdnE-cap15) is introduced in S.aureus strain RN4220 there is strong protection against lytic DNA phages 80alpha-vir and phi-NM1-gamma-6 but little to no protection against phages phi-NM4-gamma-4 or phi-12-gamma-3. This is CD-NTase-associated protein 15 from Staphylococcus schleiferi.